Here is a 259-residue protein sequence, read N- to C-terminus: uncharacterized protein (259 aa).

Positions 1–22 (MKHSSKIIVFVSFLILTIFIGG) are cleaved as a signal peptide. Cys23 carries N-palmitoyl cysteine lipidation. Residue Cys23 is the site of S-diacylglycerol cysteine attachment.

Belongs to the staphylococcal tandem lipoprotein family.

It is found in the cell membrane. This is an uncharacterized protein from Staphylococcus epidermidis (strain ATCC 35984 / DSM 28319 / BCRC 17069 / CCUG 31568 / BM 3577 / RP62A).